Here is a 543-residue protein sequence, read N- to C-terminus: Carboxypeptidase Y homolog A (543 aa).

The first 17 residues, 1–17 (MKFLTTGLLATAALAAA), serve as a signal peptide directing secretion. A propeptide spanning residues 18–124 (QEQQVLQAED…KLHNYDLRVK (107 aa)) is cleaved from the precursor. 5 cysteine pairs are disulfide-bonded: cysteine 179/cysteine 419, cysteine 313/cysteine 327, cysteine 337/cysteine 360, cysteine 344/cysteine 353, and cysteine 382/cysteine 389. Asparagine 210 carries an N-linked (GlcNAc...) asparagine glycan. Serine 266 is a catalytic residue. Aspartate 458 is a catalytic residue. An N-linked (GlcNAc...) asparagine glycan is attached at asparagine 509. Histidine 520 is a catalytic residue.

Belongs to the peptidase S10 family.

It is found in the vacuole. It catalyses the reaction Release of a C-terminal amino acid with broad specificity.. Functionally, vacuolar carboxypeptidase involved in degradation of small peptides. Digests preferentially peptides containing an aliphatic or hydrophobic residue in P1' position, as well as methionine, leucine or phenylalanine in P1 position of ester substrate. The polypeptide is Carboxypeptidase Y homolog A (CPYA) (Trichophyton tonsurans (Scalp ringworm fungus)).